The primary structure comprises 240 residues: Proteasome subunit alpha (240 aa).

It belongs to the peptidase T1A family. As to quaternary structure, the 20S proteasome core is composed of 14 alpha and 14 beta subunits that assemble into four stacked heptameric rings, resulting in a barrel-shaped structure. The two inner rings, each composed of seven catalytic beta subunits, are sandwiched by two outer rings, each composed of seven alpha subunits. The catalytic chamber with the active sites is on the inside of the barrel. Has a gated structure, the ends of the cylinder being occluded by the N-termini of the alpha-subunits. Is capped at one or both ends by the proteasome regulatory ATPase, PAN.

Its subcellular location is the cytoplasm. Its activity is regulated as follows. The formation of the proteasomal ATPase PAN-20S proteasome complex, via the docking of the C-termini of PAN into the intersubunit pockets in the alpha-rings, triggers opening of the gate for substrate entry. Interconversion between the open-gate and close-gate conformations leads to a dynamic regulation of the 20S proteasome proteolysis activity. Its function is as follows. Component of the proteasome core, a large protease complex with broad specificity involved in protein degradation. The polypeptide is Proteasome subunit alpha (Methanoregula boonei (strain DSM 21154 / JCM 14090 / 6A8)).